Consider the following 554-residue polypeptide: 3-(3-hydroxy-phenyl)propionate/3-hydroxycinnamic acid hydroxylase (554 aa).

FAD-binding positions include 17 to 46 (QVAI…VVEK) and 285 to 295 (FRIDRVLLAGD).

It belongs to the PheA/TfdB FAD monooxygenase family. FAD serves as cofactor.

It catalyses the reaction 3-(3-hydroxyphenyl)propanoate + NADH + O2 + H(+) = 3-(2,3-dihydroxyphenyl)propanoate + NAD(+) + H2O. The enzyme catalyses (2E)-3-(3-hydroxyphenyl)prop-2-enoate + NADH + O2 + H(+) = (2E)-3-(2,3-dihydroxyphenyl)prop-2-enoate + NAD(+) + H2O. Its pathway is aromatic compound metabolism; 3-phenylpropanoate degradation. Catalyzes the insertion of one atom of molecular oxygen into position 2 of the phenyl ring of 3-(3-hydroxyphenyl)propionate (3-HPP) and hydroxycinnamic acid (3HCI). This Escherichia coli (strain 55989 / EAEC) protein is 3-(3-hydroxy-phenyl)propionate/3-hydroxycinnamic acid hydroxylase.